The following is a 145-amino-acid chain: Large ribosomal subunit protein uL14m (145 aa).

Residues 1 to 30 (MAVLTGLFGFFAYVRGAVSQRCFSTSGSLS) constitute a mitochondrion transit peptide.

The protein belongs to the universal ribosomal protein uL14 family. In terms of assembly, component of the mitochondrial ribosome large subunit (39S) which comprises a 16S rRNA and about 50 distinct proteins. Interacts with MALSU1.

The protein localises to the mitochondrion. Its function is as follows. May form part of 2 intersubunit bridges in the assembled ribosome. Upon binding to MALSU1, intersubunit bridge formation is blocked, preventing ribosome formation and repressing translation. This Rattus norvegicus (Rat) protein is Large ribosomal subunit protein uL14m (Mrpl14).